The following is a 750-amino-acid chain: Sulfhydryl oxidase 1 (750 aa).

A signal peptide spans 1–32; that stretch reads MRRCGRHSGPPSLLLLLLLLPPLLLSVPGAYA. The region spanning 33-159 is the Thioredoxin domain; that stretch reads ARLSVLYSSS…RMRLIDALES (127 aa). Residues Cys73 and Cys76 each act as nucleophile in the active site. 2 disulfide bridges follow: Cys73/Cys76 and Cys104/Cys113. Asn133 and Asn246 each carry an N-linked (GlcNAc...) asparagine glycan. An intrachain disulfide couples Cys396 to Cys408. Positions 399–506 constitute an ERV/ALR sulfhydryl oxidase domain; that stretch reads SEPHFRGFPC…EDPQFPKVQW (108 aa). Residues Arg404, Trp411, His415, Asp454, His458, 481 to 488, Lys503, and Trp506 contribute to the FAD site; that span reads WTSHNRVN. A disulfide bridge links Cys452 with Cys455. Residues Cys512 and Cys515 are joined by a disulfide bond. Disordered regions lie at residues 545-567 and 585-632; these read VRDPPAPGPASRRGTQDPEASPN and EQAA…PEHT. Low complexity predominate over residues 587–597; that stretch reads AASAASPGATA. Residues 710–730 traverse the membrane as a helical segment; it reads FLDISLCVGLYSVSFMGLLAM.

This sequence belongs to the quiescin-sulfhydryl oxidase (QSOX) family. As to quaternary structure, monomer. FAD is required as a cofactor. In terms of processing, N-glycosylated. O-glycosylated on Thr and Ser residues. As to expression, isoform 3: Detected in seminal vesicle fluid (at protein level). Isoform 1: Detected in brain, hypophysis, heart, testis and the seminal vesicle. Isoform 3: Highly expressed in the seminal vesicles followed by testis, heart, brain, thymus, hypophysis and lung. Also expressed in prostate, kidney, spleen, liver.

The protein resides in the golgi apparatus membrane. It is found in the secreted. The catalysed reaction is 2 R'C(R)SH + O2 = R'C(R)S-S(R)CR' + H2O2. Its function is as follows. Catalyzes the oxidation of sulfhydryl groups in peptide and protein thiols to disulfides with the reduction of oxygen to hydrogen peroxide. Plays a role in disulfide bond formation in a variety of extracellular proteins. In fibroblasts, required for normal incorporation of laminin into the extracellular matrix, and thereby for normal cell-cell adhesion and cell migration. The chain is Sulfhydryl oxidase 1 (Qsox1) from Rattus norvegicus (Rat).